A 130-amino-acid polypeptide reads, in one-letter code: Small ribosomal subunit protein uS11c (130 aa).

It belongs to the universal ribosomal protein uS11 family. Part of the 30S ribosomal subunit.

It localises to the plastid. The protein resides in the chloroplast. The protein is Small ribosomal subunit protein uS11c of Anthoceros angustus (Hornwort).